The sequence spans 833 residues: DNA helicase MCM8 (833 aa).

Positions 395–602 constitute an MCM domain; the sequence is LLKLVVNSLC…QHDHLLSEHV (208 aa). 447–454 is an ATP binding site; sequence GDPGLGKS. Residue Ser623 is modified to Phosphoserine.

It belongs to the MCM family. In terms of assembly, component of the MCM8-MCM9 complex, which forms a hexamer composed of MCM8 and MCM9. Interacts with the DNA mismatch repair (MMR) complex composed at least of MSH2, MSH3, MSH6, PMS1 and MLH1. Interacts with RAD51; the interaction recruits RAD51 to DNA damage sites. Interacts with the MRN complex composed of MRE11, RAD50 and NBN/NBS1. Interacts with CDC6 and ORC2. Interacts with HROB; the interaction recruits the MCM8-MCM9 complex to DNA damage sites.

The protein resides in the nucleus. The protein localises to the chromosome. It carries out the reaction ATP + H2O = ADP + phosphate + H(+). In terms of biological role, component of the MCM8-MCM9 complex, a complex involved in the repair of double-stranded DNA breaks (DBSs) and DNA interstrand cross-links (ICLs) by homologous recombination (HR). Required for DNA resection by the MRE11-RAD50-NBN/NBS1 (MRN) complex by recruiting the MRN complex to the repair site and by promoting the complex nuclease activity. Probably by regulating the localization of the MNR complex, indirectly regulates the recruitment of downstream effector RAD51 to DNA damage sites including DBSs and ICLs. The MCM8-MCM9 complex is dispensable for DNA replication and S phase progression. However, may play a non-essential for DNA replication: may be involved in the activation of the prereplicative complex (pre-RC) during G(1) phase by recruiting CDC6 to the origin recognition complex (ORC). Probably by regulating HR, plays a key role during gametogenesis. Stabilizes MCM9 protein. This chain is DNA helicase MCM8 (Mcm8), found in Mus musculus (Mouse).